A 725-amino-acid chain; its full sequence is Catalase-peroxidase (725 aa).

A cross-link (tryptophyl-tyrosyl-methioninium (Trp-Tyr) (with M-239)) is located at residues 90 to 213 (WHSAGTYRTG…LAAVQMGLIY (124 aa)). The active-site Proton acceptor is H91. The segment at residues 213-239 (YVNPEGPNGNPDPVAAAKDIRETFARM) is a cross-link (tryptophyl-tyrosyl-methioninium (Tyr-Met) (with W-90)). A heme b-binding site is contributed by H254.

It belongs to the peroxidase family. Peroxidase/catalase subfamily. As to quaternary structure, homodimer or homotetramer. Requires heme b as cofactor. Post-translationally, formation of the three residue Trp-Tyr-Met cross-link is important for the catalase, but not the peroxidase activity of the enzyme.

It carries out the reaction H2O2 + AH2 = A + 2 H2O. It catalyses the reaction 2 H2O2 = O2 + 2 H2O. Its function is as follows. Bifunctional enzyme with both catalase and broad-spectrum peroxidase activity. The sequence is that of Catalase-peroxidase from Hahella chejuensis (strain KCTC 2396).